The chain runs to 138 residues: Regulator of ribonuclease activity B (138 aa).

Residues 114–138 (YFEDPNGEDGDDEDFVDEDDDGVRH) are disordered. The span at 118–138 (PNGEDGDDEDFVDEDDDGVRH) shows a compositional bias: acidic residues.

It belongs to the RraB family. As to quaternary structure, interacts with the C-terminal region of Rne.

It is found in the cytoplasm. Its function is as follows. Globally modulates RNA abundance by binding to RNase E (Rne) and regulating its endonucleolytic activity. Can modulate Rne action in a substrate-dependent manner by altering the composition of the degradosome. The sequence is that of Regulator of ribonuclease activity B from Escherichia coli (strain K12).